Reading from the N-terminus, the 67-residue chain is Large ribosomal subunit protein bL31 (67 aa).

Residues C16, C18, C38, and C41 each coordinate Zn(2+).

The protein belongs to the bacterial ribosomal protein bL31 family. Type A subfamily. Part of the 50S ribosomal subunit. Requires Zn(2+) as cofactor.

Binds the 23S rRNA. In Thioalkalivibrio sulfidiphilus (strain HL-EbGR7), this protein is Large ribosomal subunit protein bL31.